The following is a 946-amino-acid chain: Protein translocase subunit SecA (946 aa).

ATP contacts are provided by residues Gln-87, 105-109 (GEGKT), and Asp-524. Disordered regions lie at residues 872–892 (PEQP…NTGE) and 904–946 (PADT…GRYA). Positions 907 to 917 (TVEKSERDPNR) are enriched in basic and acidic residues. Zn(2+) is bound by residues Cys-930, Cys-932, Cys-941, and His-942. Basic residues predominate over residues 936-946 (KKYKHCHGRYA).

The protein belongs to the SecA family. Monomer and homodimer. Part of the essential Sec protein translocation apparatus which comprises SecA, SecYEG and auxiliary proteins SecDF-YajC and YidC. It depends on Zn(2+) as a cofactor.

The protein localises to the cell inner membrane. It localises to the cytoplasm. The catalysed reaction is ATP + H2O + cellular proteinSide 1 = ADP + phosphate + cellular proteinSide 2.. Functionally, part of the Sec protein translocase complex. Interacts with the SecYEG preprotein conducting channel. Has a central role in coupling the hydrolysis of ATP to the transfer of proteins into and across the cell membrane, serving both as a receptor for the preprotein-SecB complex and as an ATP-driven molecular motor driving the stepwise translocation of polypeptide chains across the membrane. The protein is Protein translocase subunit SecA of Rhodopseudomonas palustris (strain BisB5).